A 143-amino-acid polypeptide reads, in one-letter code: Transcriptional regulator MraZ (143 aa).

SpoVT-AbrB domains lie at Thr5–Glu47 and Ala76–Ala119.

It belongs to the MraZ family. As to quaternary structure, forms oligomers.

It is found in the cytoplasm. It localises to the nucleoid. The polypeptide is Transcriptional regulator MraZ (Kocuria rhizophila (strain ATCC 9341 / DSM 348 / NBRC 103217 / DC2201)).